We begin with the raw amino-acid sequence, 125 residues long: Histone H2A (125 aa).

The segment covering 1–18 (MSGRGKGGKARAKAKSRS) has biased composition (basic residues). Positions 1–21 (MSGRGKGGKARAKAKSRSSRA) are disordered. Serine 2 carries the post-translational modification N-acetylserine. Serine 2 is subject to Phosphoserine. At glutamine 104 the chain carries N5-methylglutamine.

The protein belongs to the histone H2A family. In terms of assembly, the nucleosome is a histone octamer containing two molecules each of H2A, H2B, H3 and H4 assembled in one H3-H4 heterotetramer and two H2A-H2B heterodimers. The octamer wraps approximately 147 bp of DNA.

It localises to the nucleus. The protein resides in the chromosome. Its function is as follows. Core component of nucleosome. Nucleosomes wrap and compact DNA into chromatin, limiting DNA accessibility to the cellular machineries which require DNA as a template. Histones thereby play a central role in transcription regulation, DNA repair, DNA replication and chromosomal stability. DNA accessibility is regulated via a complex set of post-translational modifications of histones, also called histone code, and nucleosome remodeling. The sequence is that of Histone H2A from Asterias rubens (Common European starfish).